A 119-amino-acid polypeptide reads, in one-letter code: NLYQFKNMIKCTVPSRSWWHFANYGCYCGRGGSGTPVDDLDRCCQTHDNCYSDAEKISGCRPYFKTYSYDCTKGKLTCKEGNNECAAFVCKCDRLAAICFAGAHYNDNNNYIDLARHCQ.

Disulfide bonds link Cys-11/Cys-71, Cys-26/Cys-118, Cys-28/Cys-44, Cys-43/Cys-99, Cys-50/Cys-92, Cys-60/Cys-85, and Cys-78/Cys-90. Tyr-27, Gly-29, Gly-31, and Asp-48 together coordinate Ca(2+). Asp-93 is a catalytic residue.

This sequence belongs to the phospholipase A2 family. Group I subfamily. D49 sub-subfamily. The cofactor is Ca(2+). In terms of tissue distribution, expressed by the venom gland.

Its subcellular location is the secreted. It catalyses the reaction a 1,2-diacyl-sn-glycero-3-phosphocholine + H2O = a 1-acyl-sn-glycero-3-phosphocholine + a fatty acid + H(+). PLA2 catalyzes the calcium-dependent hydrolysis of the 2-acyl groups in 3-sn-phosphoglycerides. The polypeptide is Basic phospholipase A2 DE-1 (Hemachatus haemachatus (Rinkhals)).